The primary structure comprises 96 residues: Co-chaperonin GroES (96 aa).

This sequence belongs to the GroES chaperonin family. In terms of assembly, heptamer of 7 subunits arranged in a ring. Interacts with the chaperonin GroEL.

It localises to the cytoplasm. Together with the chaperonin GroEL, plays an essential role in assisting protein folding. The GroEL-GroES system forms a nano-cage that allows encapsulation of the non-native substrate proteins and provides a physical environment optimized to promote and accelerate protein folding. GroES binds to the apical surface of the GroEL ring, thereby capping the opening of the GroEL channel. The chain is Co-chaperonin GroES from Leptospira borgpetersenii serovar Hardjo-bovis (strain JB197).